Here is a 224-residue protein sequence, read N- to C-terminus: Phosphoglycolate phosphatase (224 aa).

Asp10 (nucleophile) is an active-site residue. 3 residues coordinate Mg(2+): Asp10, Asp12, and Asp176.

It belongs to the HAD-like hydrolase superfamily. CbbY/CbbZ/Gph/YieH family. The cofactor is Mg(2+).

It catalyses the reaction 2-phosphoglycolate + H2O = glycolate + phosphate. The protein operates within organic acid metabolism; glycolate biosynthesis; glycolate from 2-phosphoglycolate: step 1/1. In terms of biological role, specifically catalyzes the dephosphorylation of 2-phosphoglycolate. Is involved in the dissimilation of the intracellular 2-phosphoglycolate formed during the DNA repair of 3'-phosphoglycolate ends, a major class of DNA lesions induced by oxidative stress. The chain is Phosphoglycolate phosphatase from Pasteurella multocida (strain Pm70).